A 223-amino-acid polypeptide reads, in one-letter code: Protein-L-isoaspartate O-methyltransferase (223 aa).

The active site involves Ser-70.

The protein belongs to the methyltransferase superfamily. L-isoaspartyl/D-aspartyl protein methyltransferase family.

The protein resides in the cytoplasm. It catalyses the reaction [protein]-L-isoaspartate + S-adenosyl-L-methionine = [protein]-L-isoaspartate alpha-methyl ester + S-adenosyl-L-homocysteine. Catalyzes the methyl esterification of L-isoaspartyl residues in peptides and proteins that result from spontaneous decomposition of normal L-aspartyl and L-asparaginyl residues. It plays a role in the repair and/or degradation of damaged proteins. This is Protein-L-isoaspartate O-methyltransferase from Saccharophagus degradans (strain 2-40 / ATCC 43961 / DSM 17024).